The sequence spans 88 residues: Small ribosomal subunit protein uS17 (88 aa).

This sequence belongs to the universal ribosomal protein uS17 family. In terms of assembly, part of the 30S ribosomal subunit.

Functionally, one of the primary rRNA binding proteins, it binds specifically to the 5'-end of 16S ribosomal RNA. This is Small ribosomal subunit protein uS17 from Nitrosospira multiformis (strain ATCC 25196 / NCIMB 11849 / C 71).